The chain runs to 209 residues: Thiamine-phosphate synthase (209 aa).

4-amino-2-methyl-5-(diphosphooxymethyl)pyrimidine-binding positions include 41–45 (QYRNK) and asparagine 73. The Mg(2+) site is built by aspartate 74 and aspartate 93. Residue serine 112 participates in 4-amino-2-methyl-5-(diphosphooxymethyl)pyrimidine binding. Residue 139-141 (SST) coordinates 2-[(2R,5Z)-2-carboxy-4-methylthiazol-5(2H)-ylidene]ethyl phosphate. A 4-amino-2-methyl-5-(diphosphooxymethyl)pyrimidine-binding site is contributed by lysine 142. Glycine 168 is a binding site for 2-[(2R,5Z)-2-carboxy-4-methylthiazol-5(2H)-ylidene]ethyl phosphate.

The protein belongs to the thiamine-phosphate synthase family. The cofactor is Mg(2+).

It carries out the reaction 2-[(2R,5Z)-2-carboxy-4-methylthiazol-5(2H)-ylidene]ethyl phosphate + 4-amino-2-methyl-5-(diphosphooxymethyl)pyrimidine + 2 H(+) = thiamine phosphate + CO2 + diphosphate. It catalyses the reaction 2-(2-carboxy-4-methylthiazol-5-yl)ethyl phosphate + 4-amino-2-methyl-5-(diphosphooxymethyl)pyrimidine + 2 H(+) = thiamine phosphate + CO2 + diphosphate. The catalysed reaction is 4-methyl-5-(2-phosphooxyethyl)-thiazole + 4-amino-2-methyl-5-(diphosphooxymethyl)pyrimidine + H(+) = thiamine phosphate + diphosphate. It participates in cofactor biosynthesis; thiamine diphosphate biosynthesis; thiamine phosphate from 4-amino-2-methyl-5-diphosphomethylpyrimidine and 4-methyl-5-(2-phosphoethyl)-thiazole: step 1/1. Functionally, condenses 4-methyl-5-(beta-hydroxyethyl)thiazole monophosphate (THZ-P) and 2-methyl-4-amino-5-hydroxymethyl pyrimidine pyrophosphate (HMP-PP) to form thiamine monophosphate (TMP). The sequence is that of Thiamine-phosphate synthase from Methylobacillus flagellatus (strain ATCC 51484 / DSM 6875 / VKM B-1610 / KT).